The primary structure comprises 247 residues: 2,3-bisphosphoglycerate-dependent phosphoglycerate mutase (247 aa).

Residues 8 to 15, 21 to 22, R60, 87 to 90, K98, 114 to 115, and 183 to 184 contribute to the substrate site; these read RHGESQWN, TG, ERHY, RR, and GN. H9 serves as the catalytic Tele-phosphohistidine intermediate. E87 functions as the Proton donor/acceptor in the catalytic mechanism.

It belongs to the phosphoglycerate mutase family. BPG-dependent PGAM subfamily.

It carries out the reaction (2R)-2-phosphoglycerate = (2R)-3-phosphoglycerate. It functions in the pathway carbohydrate degradation; glycolysis; pyruvate from D-glyceraldehyde 3-phosphate: step 3/5. Its function is as follows. Catalyzes the interconversion of 2-phosphoglycerate and 3-phosphoglycerate. The polypeptide is 2,3-bisphosphoglycerate-dependent phosphoglycerate mutase (Chlorobium phaeobacteroides (strain DSM 266 / SMG 266 / 2430)).